A 328-amino-acid chain; its full sequence is Malate dehydrogenase (328 aa).

11-17 (GAAGQIG) lines the NAD(+) pocket. The substrate site is built by Arg92 and Arg98. Residues Asn105, Gln112, and 129 to 131 (VGN) each bind NAD(+). Asn131 and Arg162 together coordinate substrate. Catalysis depends on His187, which acts as the Proton acceptor.

The protein belongs to the LDH/MDH superfamily. MDH type 2 family.

It catalyses the reaction (S)-malate + NAD(+) = oxaloacetate + NADH + H(+). Catalyzes the reversible oxidation of malate to oxaloacetate. In Coxiella burnetii (strain CbuK_Q154) (Coxiella burnetii (strain Q154)), this protein is Malate dehydrogenase.